The sequence spans 854 residues: Disrupted in schizophrenia 1 protein (854 aa).

The span at 1 to 18 shows a compositional bias: gly residues; the sequence is MPGGGPQGAPAAAGGGGV. Disordered regions lie at residues 1-24, 179-205, 221-257, and 278-323; these read MPGGGPQGAPAAAGGGGVSHRAGS, SAELSSNSCSPGCGPEVPPTPPGSHSA, GERGEAEGCPPSREAESHCQSPQEMGAKAASLDGPHE, and AQAA…SGDA. An interaction with MAP1A region spans residues 1–292; the sequence is MPGGGPQGAP…NSSRPERDMH (292 aa). The Interaction with FBXW7 motif lies at 197–203; that stretch reads PTPPGSH. Positions 285-295 are enriched in basic and acidic residues; it reads SRPERDMHSLP. Positions 293–696 are interaction with TRAF3IP1; it reads SLPDMDPGSS…LGKVWEADLE (404 aa). Positions 296-309 are enriched in low complexity; sequence DMDPGSSSSLDPSL. Coiled coils occupy residues 366-394, 452-505, and 602-666; these read ENDDYDKAETLQQRLEDLEQEKISLHFQL, ITRR…CDLT, and WTAK…SVKE. Residue Lys372 forms a Glycyl lysine isopeptide (Lys-Gly) (interchain with G-Cter in ubiquitin) linkage. The required for localization to punctate cytoplasmic foci stretch occupies residues 440 to 597; that stretch reads LEPTAQDSLH…LLEAKMHAIS (158 aa). Residues 446–854 are necessary and sufficient for interaction with PCNT and localization at the centrosome; sequence DSLHVSITRR…MTAGVHEAQA (409 aa). The tract at residues 598 to 854 is interaction with ATF4 and ATF5; sequence GNHFWTAKDL…MTAGVHEAQA (257 aa). A disordered region spans residues 716 to 739; it reads VEDERQMDDLEGAAPPIPPRLHSE. The tract at residues 727-854 is interaction with PAFAH1B1; that stretch reads GAAPPIPPRL…MTAGVHEAQA (128 aa). Positions 802-830 form a coiled coil; sequence SHDEDLIQSLRRELQMVKETLQAMILQLQ. Residues 802–835 are interaction with NDEL1; sequence SHDEDLIQSLRRELQMVKETLQAMILQLQPAKEA.

As to quaternary structure, interacts with NDEL1. Interacts with CCDC88A (via C-terminus); the interaction is direct. Interacts with GSK3B. Interacts with tubulin alpha, ACTN2, ANKHD1, ATF4, ATF5, CEP63, EIF3S3, MAP1A, NDEL1, PAFAH1B1, RANBP9, SPTBN4, SYNE1 and TRAF3IP1. Interaction with microtubules may be mediated in part by TRAF3IP1. Interacts (via C-terminal) with PCNT. Interacts with CHCHD6. Interacts with CCDC141. Interacts with FBXW7, the substrate-recognition component of a SCF (SKP1-CUL1-F-box protein) E3 ubiquitin-protein ligase complex; the interaction targets DISC1 for proteasomal degradation. Interacts with ZNF365. Interacts with ATF4; inhibiting ATF4 transcription factor activity by disrupting ATF4 dimerization and DNA-binding. Interacts with PDE4B (isoform PDE4B5). Ubiquitinated. Ubiquitination with 'Lys-48'-linked polyubiquitin chains leads to its proteasomal degradation. In terms of tissue distribution, ubiquitous. Highly expressed in the dentate gyrus of the hippocampus. Also expressed in the temporal and parahippocampal cortices and cells of the white matter.

Its subcellular location is the cytoplasm. The protein resides in the cytoskeleton. It localises to the mitochondrion. The protein localises to the microtubule organizing center. It is found in the centrosome. Its subcellular location is the postsynaptic density. Involved in the regulation of multiple aspects of embryonic and adult neurogenesis. Required for neural progenitor proliferation in the ventrical/subventrical zone during embryonic brain development and in the adult dentate gyrus of the hippocampus. Participates in the Wnt-mediated neural progenitor proliferation as a positive regulator by modulating GSK3B activity and CTNNB1 abundance. Plays a role as a modulator of the AKT-mTOR signaling pathway controlling the tempo of the process of newborn neurons integration during adult neurogenesis, including neuron positioning, dendritic development and synapse formation. Inhibits the activation of AKT-mTOR signaling upon interaction with CCDC88A. Regulates the migration of early-born granule cell precursors toward the dentate gyrus during the hippocampal development. Inhibits ATF4 transcription factor activity in neurons by disrupting ATF4 dimerization and DNA-binding. Plays a role, together with PCNT, in the microtubule network formation. The chain is Disrupted in schizophrenia 1 protein from Homo sapiens (Human).